The primary structure comprises 141 residues: Fluoride-specific ion channel FluC 1 (141 aa).

A run of 4 helical transmembrane segments spans residues 12–32, 44–64, 79–99, and 107–127; these read LYAL…LVGV, WATL…AAIA, FVMT…LETF, and ALAA…AVWL. Positions 86 and 89 each coordinate Na(+).

It belongs to the fluoride channel Fluc/FEX (TC 1.A.43) family.

The protein localises to the cell inner membrane. The enzyme catalyses fluoride(in) = fluoride(out). Na(+) is not transported, but it plays an essential structural role and its presence is essential for fluoride channel function. Fluoride-specific ion channel. Important for reducing fluoride concentration in the cell, thus reducing its toxicity. The chain is Fluoride-specific ion channel FluC 1 from Rhodopseudomonas palustris (strain BisB18).